The primary structure comprises 406 residues: Cysteine desulfurase (406 aa).

K226 is modified (N6-(pyridoxal phosphate)lysine). Catalysis depends on C364, which acts as the Cysteine persulfide intermediate.

Belongs to the class-V pyridoxal-phosphate-dependent aminotransferase family. Csd subfamily. In terms of assembly, homodimer. Interacts with SufE and the SufBCD complex composed of SufB, SufC and SufD. The interaction with SufE is required to mediate the direct transfer of the sulfur atom from the S-sulfanylcysteine. The cofactor is pyridoxal 5'-phosphate.

It is found in the cytoplasm. It carries out the reaction (sulfur carrier)-H + L-cysteine = (sulfur carrier)-SH + L-alanine. The enzyme catalyses L-selenocysteine + AH2 = hydrogenselenide + L-alanine + A + H(+). It participates in cofactor biosynthesis; iron-sulfur cluster biosynthesis. In terms of biological role, cysteine desulfurases mobilize the sulfur from L-cysteine to yield L-alanine, an essential step in sulfur metabolism for biosynthesis of a variety of sulfur-containing biomolecules. Component of the suf operon, which is activated and required under specific conditions such as oxidative stress and iron limitation. Acts as a potent selenocysteine lyase in vitro, that mobilizes selenium from L-selenocysteine. Selenocysteine lyase activity is however unsure in vivo. This Escherichia coli O7:K1 (strain IAI39 / ExPEC) protein is Cysteine desulfurase.